We begin with the raw amino-acid sequence, 726 residues long: MSTTDDTHNTLSAGKCPFHQGGHDRSAGAGTASRDWWPNQLRVDLLNQHSNRSNPLGEDFDYRKEFSKLDYSALKGDLKALLTDSQPWWPADWGSYVGLFIRMAWHGAGTYRSIDGRGGAGRGQQRFAPLNSWPDNVSLDKARRLLWPIKQKYGQKISWADLFILAGNVALENSGFRTFGFGAGREDVWEPDLDVNWGDEKAWLTHRHPEALAKAPLGATEMGLIYVNPEGPDHSGEPLSAAAAIRATFGNMGMNDEETVALIAGGHTLGKTHGAAAASHVGADPEAAPIEAQGLGWASSYGSGVGADAITSGLEVVWTQTPTQWSNYFFENLFKYEWVQTRSPAGAIQFEAVDAPDIIPDPFDPSKKRKPTMLVTDLTLRFDPEFEKISRRFLNDPQAFNEAFARAWFKLTHRDMGPKARYIGPEVPKEDLIWQDPLPQPLYQPTQEDIINLKAAIAASGLSVSEMVSVAWASASTFRGGDKRGGANGARLALAPQRDWDVNAVAARVLPVLEALQKTTNKASLADIIVLAGVVGIEQAAAAAGVSISVPFAPGRVDARQDQTDIEMFSLLEPIADGFRNYRARLDVSTTESLLIDKAQQLTLTAPEMTVLVGGMRVLGTNFDGSQNGVFTDRPGVLSTDFFANLLDMRYEWKPTDDANELFEGRDRLTGEVKYTATRADLVFGSNSVLRALAEVYACSDAHEKFVKDFVAAWVKVMNLDRFDLL.

The segment at 1 to 33 (MSTTDDTHNTLSAGKCPFHQGGHDRSAGAGTAS) is disordered. Positions 105 to 226 (WHGAGTYRSI…LGATEMGLIY (122 aa)) form a cross-link, tryptophyl-tyrosyl-methioninium (Trp-Tyr) (with M-252). Histidine 106 functions as the Proton acceptor in the catalytic mechanism. The segment at residues 226–252 (YVNPEGPDHSGEPLSAAAAIRATFGNM) is a cross-link (tryptophyl-tyrosyl-methioninium (Tyr-Met) (with W-105)). Histidine 267 is a heme b binding site.

Belongs to the peroxidase family. Peroxidase/catalase subfamily. Homodimer or homotetramer. Requires heme b as cofactor. Formation of the three residue Trp-Tyr-Met cross-link is important for the catalase, but not the peroxidase activity of the enzyme.

It carries out the reaction H2O2 + AH2 = A + 2 H2O. The catalysed reaction is 2 H2O2 = O2 + 2 H2O. Functionally, bifunctional enzyme with both catalase and broad-spectrum peroxidase activity. The sequence is that of Catalase-peroxidase from Salmonella arizonae (strain ATCC BAA-731 / CDC346-86 / RSK2980).